The chain runs to 226 residues: Peroxynitrite isomerase (226 aa).

The GXWXGXG signature appears at 21-27 (GSWEGQG). H191 lines the heme b pocket. Residues 201–226 (SAAEGRLAPGAERPRGAGGRKQGEQS) are disordered.

This sequence belongs to the nitrobindin family. Homodimer. Heme b is required as a cofactor.

The enzyme catalyses peroxynitrite = nitrate. Its pathway is nitrogen metabolism. In terms of biological role, heme-binding protein able to scavenge peroxynitrite and to protect free L-tyrosine against peroxynitrite-mediated nitration, by acting as a peroxynitrite isomerase that converts peroxynitrite to nitrate. Therefore, this protein likely plays a role in peroxynitrite sensing and in the detoxification of reactive nitrogen and oxygen species (RNS and ROS, respectively). Is able to bind nitric oxide (NO) in vitro, but may act as a sensor of peroxynitrite levels in vivo. In Micrococcus luteus (strain ATCC 4698 / DSM 20030 / JCM 1464 / CCM 169 / CCUG 5858 / IAM 1056 / NBRC 3333 / NCIMB 9278 / NCTC 2665 / VKM Ac-2230) (Micrococcus lysodeikticus), this protein is Peroxynitrite isomerase.